The following is a 493-amino-acid chain: Chaperone SurA (493 aa).

The signal sequence occupies residues 1–33 (MKRQAFSLLSRLNPWQQLLLSAVLVTLAAPAAA). The disordered stretch occupies residues 46 to 76 (FTQQGSQSASQGSTVAPSQPMMGVPQPSSQP). Low complexity predominate over residues 48-58 (QQGSQSASQGS). PpiC domains follow at residues 230–332 (PTEF…KLVS) and 346–444 (IAQT…QVEN).

It localises to the periplasm. The catalysed reaction is [protein]-peptidylproline (omega=180) = [protein]-peptidylproline (omega=0). Its function is as follows. Chaperone involved in the correct folding and assembly of outer membrane proteins. Recognizes specific patterns of aromatic residues and the orientation of their side chains, which are found more frequently in integral outer membrane proteins. May act in both early periplasmic and late outer membrane-associated steps of protein maturation. The protein is Chaperone SurA of Cupriavidus metallidurans (strain ATCC 43123 / DSM 2839 / NBRC 102507 / CH34) (Ralstonia metallidurans).